The chain runs to 199 residues: Phosphoheptose isomerase (199 aa).

Residues methionine 36 to aspartate 198 form the SIS domain. Residue asparagine 51 to glycine 53 participates in substrate binding. Histidine 60 and glutamate 64 together coordinate Zn(2+). Residues glutamate 64, asparagine 93 to aspartate 94, serine 119 to serine 121, serine 124, and glutamine 174 contribute to the substrate site. Positions 174 and 182 each coordinate Zn(2+).

Belongs to the SIS family. GmhA subfamily. In terms of assembly, homotetramer. It depends on Zn(2+) as a cofactor.

It is found in the cytoplasm. It catalyses the reaction 2 D-sedoheptulose 7-phosphate = D-glycero-alpha-D-manno-heptose 7-phosphate + D-glycero-beta-D-manno-heptose 7-phosphate. It functions in the pathway carbohydrate biosynthesis; D-glycero-D-manno-heptose 7-phosphate biosynthesis; D-glycero-alpha-D-manno-heptose 7-phosphate and D-glycero-beta-D-manno-heptose 7-phosphate from sedoheptulose 7-phosphate: step 1/1. Catalyzes the isomerization of sedoheptulose 7-phosphate in D-glycero-D-manno-heptose 7-phosphate. This Coxiella burnetii (strain CbuK_Q154) (Coxiella burnetii (strain Q154)) protein is Phosphoheptose isomerase.